We begin with the raw amino-acid sequence, 1052 residues long: Germline survival defective-1 (1052 aa).

The first 25 residues, M1–A25, serve as a signal peptide directing secretion. Disordered regions lie at residues L41–N320, V478–P543, P667–E689, K933–A965, and S1033–F1052. The span at A67–T145 shows a compositional bias: low complexity. Residues T163–G172 are compositionally biased toward polar residues. Over residues T178–T190 the composition is skewed to basic and acidic residues. Over residues N244–I279 the composition is skewed to low complexity. Over residues K305–N320 the composition is skewed to basic and acidic residues. The gld-4 binding stretch occupies residues Q424 to S732. Positions G480–P514 are enriched in polar residues. The segment covering D674 to E689 has biased composition (acidic residues). Residues P892–F1052 are gld-3 binding. The segment covering E950 to S963 has biased composition (low complexity). Residues G1038–F1052 are compositionally biased toward gly residues.

As to quaternary structure, isoform C interacts (via C-terminus) with gld-3 isoform A (via C-terminus) in an RNA-independent manner. Isoform C interacts with gld-4. In terms of tissue distribution, expressed in the germline (at protein level). In the early embryo is expressed in all cells, then becomes gradually restricted to the germ cell lineage and enriches in P granules (at protein level). In adult hermaphrodites, is expressed in the mitotic region, accumulates during early stages of meiotic prophase I and is slightly less abundant in maturing oocytes (at protein level).

Its subcellular location is the cytoplasm. It is found in the cytoplasmic granule. Functionally, required maternally for germline survival by forming a maternal complex with gld-3. During hermaphrodite development forms a complex with gld-3 which promotes the sperm/oocyte switch freeing the translational repressor fbf to turn off sperm promoting factors. Required for proper oocyte differentiation and oogenic meiotic arrest. Stimulates the enzymatic activity of gld-4 and together they prevent gld-1 mRNA degradation. This chain is Germline survival defective-1, found in Caenorhabditis elegans.